The chain runs to 483 residues: Leukocyte immunoglobulin-like receptor subfamily A member 2 (483 aa).

Residues 1-23 form the signal peptide; it reads MTPILTVLICLGLSLGPRTHVQA. At 24–449 the chain is on the extracellular side; it reads GHLPKPTLWA…QHPQDYTVEN (426 aa). Ig-like C2-type domains follow at residues 27–113, 117–222, 224–313, and 324–413; these read PKPT…DPLE, TGAY…GVSK, PSLS…DPLD, and PSLS…SDPL. Cysteine 49 and cysteine 97 are oxidised to a cystine. Residues asparagine 64, asparagine 103, and asparagine 138 are each glycosylated (N-linked (GlcNAc...) asparagine). Intrachain disulfides connect cysteine 143/cysteine 195 and cysteine 244/cysteine 295. 3 N-linked (GlcNAc...) asparagine glycosylation sites follow: asparagine 279, asparagine 300, and asparagine 339. Cysteine 344 and cysteine 395 form a disulfide bridge. Tyrosine 404 carries the 3'-nitrotyrosine modification. N-linked (GlcNAc...) asparagine glycosylation occurs at asparagine 429. A helical transmembrane segment spans residues 450 to 470; that stretch reads LIRMGVAGLVLVVLGILLFEA. Residues 471–483 lie on the Cytoplasmic side of the membrane; sequence QHSQRSLQDAAGR.

Homodimer. In terms of tissue distribution, detected on the surface of all peripheral blood monocytes, neutrophils, basophils and eosinophils (at protein level). Expression levels are very low or not detectable on monocytes, T-cells, B-cells, dendritic cells and natural killer (NK) cells.

The protein localises to the cell membrane. The protein resides in the secreted. In terms of biological role, part of the innate immune responses against microbial infection. Specifically recognizes a set of N-terminally truncated immunoglobulins that are produced via cleavage by proteases from a range of pathogenic bacteria and fungi, including L.pneumophila, M.hyorhinis, S.pneumoniae, S.aureus and C.albicans. Recognizes epitopes that are in part in the variable region of the immunoglobulin light chains, but requires also the constant region for signaling. Binds to a subset of cleaved IgM, IgG3 and IgG4 molecules, but does not bind cleaved IgA1. Binding of N-terminally truncated immunoglobulins mediates activation of neutrophils. In monocytes, activation leads to the release of CSF2, CF3, IL6, CXCL8 and CCL3 and down-regulates responses to bacterial lipopolysaccharide (LPS), possibly via down-regulation of TLR4 expression and reduced signaling via TLR4. In eosinophils, activation by ligand binding leads to the release of RNASE2, IL4 and leukotriene C4. Does not bind class I MHC antigens. The chain is Leukocyte immunoglobulin-like receptor subfamily A member 2 (LILRA2) from Homo sapiens (Human).